Here is a 466-residue protein sequence, read N- to C-terminus: Ferrochelatase-1, chloroplastic/mitochondrial (466 aa).

Residues 1–11 (MQATALSSGFN) are compositionally biased toward polar residues. The segment at 1 to 23 (MQATALSSGFNPLTKRKDHRFPR) is disordered. The N-terminal 35 residues, 1–35 (MQATALSSGFNPLTKRKDHRFPRSCSQRNSLSLIQ), are a transit peptide targeting the chloroplast and mitochondrion.

This sequence belongs to the ferrochelatase family. As to expression, expressed in roots, leaves, stems and flowers. Present in both leaves and roots.

Its subcellular location is the plastid. The protein localises to the chloroplast membrane. It localises to the chloroplast thylakoid membrane. The protein resides in the mitochondrion. The catalysed reaction is heme b + 2 H(+) = protoporphyrin IX + Fe(2+). Its pathway is porphyrin-containing compound metabolism; protoheme biosynthesis; protoheme from protoporphyrin-IX: step 1/1. Catalyzes the last step of heme biosynthesis by inserting ferrous iron into protoporphyrin IX to produce protoheme. Produces heme for photosynthetic cytochromes, but does not seem to be involved in stress responses. May be involved in wound-induced supply of heme to defensive hemoproteins outside plastids. Regulates the expression of photosynthesis-associated nuclear genes in undeveloped chloroplasts through production of heme. The chain is Ferrochelatase-1, chloroplastic/mitochondrial from Arabidopsis thaliana (Mouse-ear cress).